A 658-amino-acid polypeptide reads, in one-letter code: Carnitine O-palmitoyltransferase 2, mitochondrial (658 aa).

The transit peptide at 1–26 (MARLLTSSSALRWGAVSSSQSVGRAY) directs the protein to the mitochondrion. At 27–179 (SSGSPDTEYV…GYLEPEIFHL (153 aa)) the chain is on the mitochondrial matrix side. The segment at residues 180–209 (NPAKSDTLTFRKLIRFVPSSLSWYGAYMVN) is an intramembrane region (note=Mitochondrial inner membrane). At 210-658 (AYPLDMSQYF…FTVLQDKPIK (449 aa)) the chain is on the mitochondrial matrix side. His373 (proton acceptor) is an active-site residue. 453–465 (GKELLKTQKLSPD) provides a ligand contact to CoA. Residues Tyr487, Ser489, and Thr500 each contribute to the (R)-carnitine site.

The protein belongs to the carnitine/choline acetyltransferase family.

The protein resides in the mitochondrion inner membrane. It carries out the reaction (R)-carnitine + hexadecanoyl-CoA = O-hexadecanoyl-(R)-carnitine + CoA. It catalyses the reaction octanoyl-CoA + (R)-carnitine = O-octanoyl-(R)-carnitine + CoA. The catalysed reaction is decanoyl-CoA + (R)-carnitine = O-decanoyl-(R)-carnitine + CoA. The enzyme catalyses dodecanoyl-CoA + (R)-carnitine = O-dodecanoyl-R-carnitine + CoA. It carries out the reaction tetradecanoyl-CoA + (R)-carnitine = O-tetradecanoyl-(R)-carnitine + CoA. It catalyses the reaction (R)-carnitine + octadecanoyl-CoA = O-octadecanoyl-(R)-carnitine + CoA. The catalysed reaction is eicosanoyl-CoA + (R)-carnitine = O-eicosanoyl-(R)-carnitine + CoA. The enzyme catalyses (9Z)-tetradecenoyl-CoA + (R)-carnitine = O-(9Z)-tetradecenoyl-(R)-carnitine + CoA. It carries out the reaction (5Z)-tetradecenoyl-CoA + (R)-carnitine = O-(5Z)-tetradecenoyl-(R)-carnitine + CoA. It catalyses the reaction (R)-carnitine + (9Z)-octadecenoyl-CoA = O-(9Z)-octadecenoyl-(R)-carnitine + CoA. The catalysed reaction is 4,8-dimethylnonanoyl-CoA + (R)-carnitine = O-4,8-dimethylnonanoyl-(R)-carnitine + CoA. Its pathway is lipid metabolism; fatty acid beta-oxidation. In terms of biological role, involved in the intramitochondrial synthesis of acylcarnitines from accumulated acyl-CoA metabolites. Reconverts acylcarnitines back into the respective acyl-CoA esters that can then undergo beta-oxidation, an essential step for the mitochondrial uptake of long-chain fatty acids and their subsequent beta-oxidation in the mitochondrion. Active with medium (C8-C12) and long-chain (C14-C18) acyl-CoA esters. The chain is Carnitine O-palmitoyltransferase 2, mitochondrial (cpt2) from Xenopus tropicalis (Western clawed frog).